Reading from the N-terminus, the 250-residue chain is 23S rRNA (guanine(2535)-N(1))-methyltransferase (250 aa).

The catalysed reaction is guanosine(2535) in 23S rRNA + S-adenosyl-L-methionine = N(1)-methylguanosine(2535) in 23S rRNA + S-adenosyl-L-homocysteine + H(+). Its function is as follows. Specifically methylates the guanine-2535 in 23S ribosomal RNA. Confers resistance to antibiotic avilamycin, an orthosomycin antibiotic. This chain is 23S rRNA (guanine(2535)-N(1))-methyltransferase (aviRa), found in Streptomyces viridochromogenes.